The following is a 156-amino-acid chain: MPRRRVIGQRKILPDPKFGSELLAKFVNILMVDGKKSTAEAIVYSALETLAQRSGKNELEAFEVALDNVRPTVEVKSRRVGGSTYQVPVEVRPVRRNALAMRWIVEAARKRGDKSMALRLANELTDAADNKGTAVKKREDVHRMAEANKAFAHYRW.

Belongs to the universal ribosomal protein uS7 family. As to quaternary structure, part of the 30S ribosomal subunit. Contacts proteins S9 and S11.

Its function is as follows. One of the primary rRNA binding proteins, it binds directly to 16S rRNA where it nucleates assembly of the head domain of the 30S subunit. Is located at the subunit interface close to the decoding center, probably blocks exit of the E-site tRNA. The protein is Small ribosomal subunit protein uS7 of Klebsiella pneumoniae (strain 342).